We begin with the raw amino-acid sequence, 507 residues long: Pyridoxine 4-oxidase (507 aa).

The Proton acceptor role is filled by His-448.

The protein belongs to the GMC oxidoreductase family. In terms of assembly, monomer. The cofactor is FAD.

It carries out the reaction pyridoxine + O2 = pyridoxal + H2O2. It participates in cofactor degradation; B6 vitamer degradation; pyridoxal from pyridoxine (oxidase route): step 1/1. This chain is Pyridoxine 4-oxidase (pno), found in Microbacterium luteolum (Aureobacterium luteolum).